A 322-amino-acid polypeptide reads, in one-letter code: Phosphatidylserine decarboxylase proenzyme (322 aa).

Residues D90, H147, and S254 each act as charge relay system; for autoendoproteolytic cleavage activity in the active site. S254 serves as the catalytic Schiff-base intermediate with substrate; via pyruvic acid; for decarboxylase activity. S254 is subject to Pyruvic acid (Ser); by autocatalysis. The tract at residues 294 to 322 (EVEPVPLPEEEIKAEHDASPLVDDKKDET) is disordered. Positions 303 to 322 (EEIKAEHDASPLVDDKKDET) are enriched in basic and acidic residues.

Belongs to the phosphatidylserine decarboxylase family. PSD-B subfamily. Prokaryotic type I sub-subfamily. As to quaternary structure, heterodimer of a large membrane-associated beta subunit and a small pyruvoyl-containing alpha subunit. Requires pyruvate as cofactor. In terms of processing, is synthesized initially as an inactive proenzyme. Formation of the active enzyme involves a self-maturation process in which the active site pyruvoyl group is generated from an internal serine residue via an autocatalytic post-translational modification. Two non-identical subunits are generated from the proenzyme in this reaction, and the pyruvate is formed at the N-terminus of the alpha chain, which is derived from the carboxyl end of the proenzyme. The autoendoproteolytic cleavage occurs by a canonical serine protease mechanism, in which the side chain hydroxyl group of the serine supplies its oxygen atom to form the C-terminus of the beta chain, while the remainder of the serine residue undergoes an oxidative deamination to produce ammonia and the pyruvoyl prosthetic group on the alpha chain. During this reaction, the Ser that is part of the protease active site of the proenzyme becomes the pyruvoyl prosthetic group, which constitutes an essential element of the active site of the mature decarboxylase.

The protein localises to the cell membrane. The enzyme catalyses a 1,2-diacyl-sn-glycero-3-phospho-L-serine + H(+) = a 1,2-diacyl-sn-glycero-3-phosphoethanolamine + CO2. The protein operates within phospholipid metabolism; phosphatidylethanolamine biosynthesis; phosphatidylethanolamine from CDP-diacylglycerol: step 2/2. Functionally, catalyzes the formation of phosphatidylethanolamine (PtdEtn) from phosphatidylserine (PtdSer). This chain is Phosphatidylserine decarboxylase proenzyme, found in Salmonella arizonae (strain ATCC BAA-731 / CDC346-86 / RSK2980).